The sequence spans 33 residues: Dermaseptin-H6 (33 aa).

At Leu-33 the chain carries Leucine amide.

In terms of tissue distribution, expressed by the skin glands.

The protein resides in the secreted. In terms of biological role, has antimicrobial activity. The chain is Dermaseptin-H6 from Pithecopus hypochondrialis (Orange-legged leaf frog).